We begin with the raw amino-acid sequence, 742 residues long: Envelope glycoprotein H (742 aa).

Positions 1 to 29 (MRPGLPSYLIVLAVCLLSHLLSSRYGAEA) are cleaved as a signal peptide. Topologically, residues 30–719 (ISEPLDKAFH…VVDATDSRLL (690 aa)) are virion surface. Residues Asn-55, Asn-62, Asn-67, and Asn-192 are each glycosylated (N-linked (GlcNAc...) asparagine; by host). Residues 217–280 (YLIDELRYVK…QTEKHELLVL (64 aa)) are interaction with gL. 2 N-linked (GlcNAc...) asparagine; by host glycosylation sites follow: Asn-641 and Asn-700. Residues 720-740 (MMSVYALSAIIGIYLLYRMLK) form a helical membrane-spanning segment. The Intravirion segment spans residues 741 to 742 (TC).

It belongs to the herpesviridae glycoprotein H family. In terms of assembly, interacts with glycoprotein L (gL); this interaction is necessary for the correct processing and cell surface expression of gH. The heterodimer gH/gL seems to interact with gB trimers during fusion. Forms the envelope pentamer complex (PC) composed of gH, gL, UL128, UL130, and UL131A. The pentamer interacts with host NRP2. Forms the envelope trimer complex composed of gH, gL, and gO. The trimer interacts with host PDGFRA. The trimer also interacts with host EPHA2. Post-translationally, N-glycosylated, O-glycosylated, and sialylated.

Its subcellular location is the virion membrane. It is found in the host cell membrane. The protein resides in the host endosome membrane. In terms of biological role, the heterodimer glycoprotein H-glycoprotein L is required for the fusion of viral and plasma membranes leading to virus entry into the host cell. Following initial binding to host receptor, membrane fusion is mediated by the fusion machinery composed of gB and the heterodimer gH/gL. May also be involved in the fusion between the virion envelope and the outer nuclear membrane during virion morphogenesis. In human cytomegalovirus, forms two distincts complexes to mediate viral entry, a trimer and a pentamer at the surface of the virion envelope. The gH-gL-gO trimer is required for infection in fibroblasts by interacting with host PDGFRA, and in glioblastoma cells by interacting with host EPHA2. The gH-gL-UL128-UL130-UL131A pentamer is essential for viral entry in epithelial, endothelial and myeloid cells via interaction with host NRP2. The protein is Envelope glycoprotein H of Human cytomegalovirus (strain Towne) (HHV-5).